Here is a 548-residue protein sequence, read N- to C-terminus: MNRAENLDSIPTDLILEIFSRMSTKSIGRCRCVSKLWKSMLGHPYFTELFLTRSSDHPRLLFGVKRERQWLFFSSPQPQDLYEKSSLVDFHMNFSDFHMNFSGDIRRNECTYVSGFIYFPRKRIKNYLCDFRVICNPITGQYAILQLITFHEKRSFLGFDPIDKQFKVLRMKYNDRGIVVHHILTLEPGKMRWRKIRCPLAHEPFWEEICANGVLYYLAEPTDGGSYVICCFDVRSEKFKFIDAKCFGDFSIQLINYKGKLGGISWKYDTVDGKRTVELYMWVLEDVEKQKWSKYVYPLPGNSYHYSVAGVTAKGDIVFVKTYTSKPFYVFYVNPEKKTFQRVEIHGNHEVFDTNNLVYAFVDHVEDLQFDVMKKTYAAKPISPPKQKPKPPSTETSSREDHQGWISISSRKYHQVRTIAHRQQGRRKFESINKFNALYLDDGDEDTVAHQQRDHHTFKSISKFKAQRLLDDDEFTGVKTSKCDTSHLQNRVTAVHELHIWSITVGKVSLASQVSIKPEADTDAILDKVIEYIKRHHVTIQVEKEQNP.

The region spanning 4–53 (AENLDSIPTDLILEIFSRMSTKSIGRCRCVSKLWKSMLGHPYFTELFLTR) is the F-box domain. Residues 380–404 (KPISPPKQKPKPPSTETSSREDHQG) are disordered. The segment covering 382 to 392 (ISPPKQKPKPP) has biased composition (pro residues).

This Arabidopsis thaliana (Mouse-ear cress) protein is Putative F-box protein At1g33020.